Consider the following 212-residue polypeptide: Deoxyribose-phosphate aldolase (212 aa).

D89 serves as the catalytic Proton donor/acceptor. K151 acts as the Schiff-base intermediate with acetaldehyde in catalysis. The active-site Proton donor/acceptor is K180.

Belongs to the DeoC/FbaB aldolase family. DeoC type 1 subfamily.

Its subcellular location is the cytoplasm. The enzyme catalyses 2-deoxy-D-ribose 5-phosphate = D-glyceraldehyde 3-phosphate + acetaldehyde. It functions in the pathway carbohydrate degradation; 2-deoxy-D-ribose 1-phosphate degradation; D-glyceraldehyde 3-phosphate and acetaldehyde from 2-deoxy-alpha-D-ribose 1-phosphate: step 2/2. Catalyzes a reversible aldol reaction between acetaldehyde and D-glyceraldehyde 3-phosphate to generate 2-deoxy-D-ribose 5-phosphate. In Clostridium botulinum (strain Okra / Type B1), this protein is Deoxyribose-phosphate aldolase.